A 404-amino-acid chain; its full sequence is cAMP-dependent protein kinase regulatory subunit (404 aa).

Positions 14 to 144 are dimerization and phosphorylation; that stretch reads LTDHELLRIP…RLKTAIAGNF (131 aa). S105 bears the Phosphoserine mark. Residues 145 to 276, E223, R232, 277 to 398, E344, and R353 each bind 3',5'-cyclic AMP; these read LFSH…EKFP and CCRH…GVEE.

It belongs to the cAMP-dependent kinase regulatory chain family. In terms of assembly, tetramer, composed of 2 regulatory (R) and 2 catalytic (C) subunits. In the presence of cAMP it dissociates into 2 active monomeric C subunits and an R dimer.

In terms of biological role, cAMP-dependent protein kinase PKA regulatory subunit. The polypeptide is cAMP-dependent protein kinase regulatory subunit (PKAR) (Colletotrichum trifolii).